The following is a 174-amino-acid chain: Ribosome maturation factor RimM (174 aa).

Residues 98–172 (AGEYYYHQIV…VVTVELMEGL (75 aa)) form the PRC barrel domain.

Belongs to the RimM family. In terms of assembly, binds ribosomal protein uS19.

The protein resides in the cytoplasm. Its function is as follows. An accessory protein needed during the final step in the assembly of 30S ribosomal subunit, possibly for assembly of the head region. Essential for efficient processing of 16S rRNA. May be needed both before and after RbfA during the maturation of 16S rRNA. It has affinity for free ribosomal 30S subunits but not for 70S ribosomes. This Lactiplantibacillus plantarum (strain ATCC BAA-793 / NCIMB 8826 / WCFS1) (Lactobacillus plantarum) protein is Ribosome maturation factor RimM.